The chain runs to 325 residues: Short chain isoprenyl diphosphate synthase (325 aa).

The isopentenyl diphosphate site is built by lysine 44, arginine 47, and histidine 76. Mg(2+) contacts are provided by aspartate 83 and aspartate 87. Arginine 92 is a binding site for an all-trans-polyprenyl diphosphate. Position 93 (arginine 93) interacts with isopentenyl diphosphate. Positions 173, 174, 211, 228, and 238 each coordinate an all-trans-polyprenyl diphosphate.

Belongs to the FPP/GGPP synthase family. Homodimer. The cofactor is Mg(2+).

The protein resides in the cytoplasm. The chain is Short chain isoprenyl diphosphate synthase (idsA) from Methanothermobacter thermautotrophicus (strain ATCC 29096 / DSM 1053 / JCM 10044 / NBRC 100330 / Delta H) (Methanobacterium thermoautotrophicum).